A 365-amino-acid chain; its full sequence is NAC domain-containing protein 43 (365 aa).

Residues 16 to 180 enclose the NAC domain; the sequence is VPPGFRFHPT…GWVVCRIFKK (165 aa). The DNA-binding element occupies 116–186; that stretch reads IGMRKTLVFY…IFKKKNLHKT (71 aa).

In terms of tissue distribution, expressed in various aboveground tissues undergoing thickening of the lignified secondary wall such as anthers, filaments of stamens, the base of carpels, styles, the boundaries between siliques and pedicels, the midrib of leaf veins, and inflorescence stems, specifically in interfascicular fibers (sclerenchyma), cells differentiating into vascular vessels, and xylary fibers (secondary xylem).

It localises to the nucleus. In terms of biological role, transcription activator of genes involved in biosynthesis of secondary walls. Together with NST2 and NST3, required for the secondary cell wall thickening of sclerenchymatous fibers, secondary xylem (tracheary elements), and of the anther endocethium, which is necessary for anther dehiscence. May also regulate the secondary cell wall lignification of other tissues. The sequence is that of NAC domain-containing protein 43 (NAC043) from Arabidopsis thaliana (Mouse-ear cress).